A 224-amino-acid chain; its full sequence is Polyadenylate-binding protein 2 (224 aa).

Residues 1 to 36 (MADEDITLNEDQLLESLEETNGEQETEIATEVEEEG) show a composition bias toward acidic residues. A disordered region spans residues 1 to 40 (MADEDITLNEDQLLESLEETNGEQETEIATEVEEEGSMQI). Residues 9–74 (NEDQLLESLE…QSEVDKQMAG (66 aa)) are a coiled coil. An RRM domain is found at 96–173 (RSVYVGNVDY…RQIKVMSKRT (78 aa)).

In terms of assembly, interacts with ZC3H3. In terms of tissue distribution, expressed ubiquitously in all transcriptionally active cells.

It localises to the nucleus. The protein resides in the cytoplasm. Involved in the 3'-end formation of mRNA precursors (pre-mRNA) by the addition of a poly(A) tail of 200-250 nt to the upstream cleavage product. Stimulates poly(A) polymerase (PAPOLA) conferring processivity on the poly(A) tail elongation reaction and also controls the poly(A) tail length. Increases the affinity of poly(A) polymerase for RNA. Binds to poly(A) and to poly(G) with high affinity. May protect the poly(A) tail from degradation. Plays a role in the positive regulation of alpha-1,3 fucosylation, possibly by cooperating with swm which regulates nuclear export of fucosyltransferase FucTA. Involved in germline stem cell transit amplification, differentiation and mitosis-to-meiosis transition. This Drosophila melanogaster (Fruit fly) protein is Polyadenylate-binding protein 2.